Here is a 289-residue protein sequence, read N- to C-terminus: CRISPR system Cms protein Csm4 (289 aa).

This sequence belongs to the CRISPR-associated Csm4 family. Probably part of the Csm effector complex, that includes Cas10, Csm2, Csm3, Csm4, Csm5 and mature crRNA. Interacts with Cas10 (csm1).

Its function is as follows. CRISPR (clustered regularly interspaced short palindromic repeat) is an adaptive immune system that provides protection against mobile genetic elements (viruses, transposable elements and conjugative plasmids). CRISPR clusters contain spacers, sequences complementary to antecedent mobile elements, and target invading nucleic acids. CRISPR clusters are transcribed and processed into CRISPR RNA (crRNA). The type III-A Csm effector complex binds crRNA and acts as a crRNA-guided RNase, DNase and cyclic oligoadenylate synthase; binding of target RNA cognate to the crRNA is required for all activities. In terms of biological role, the subunit probably binds to the 5' handle of the crRNA, helping in discrimination between self- and non-self. This chain is CRISPR system Cms protein Csm4, found in Thermococcus onnurineus (strain NA1).